Reading from the N-terminus, the 67-residue chain is Prokaryotic ubiquitin-like protein Pup (67 aa).

Low complexity predominate over residues 1-11 (MAGQEQQQPQS). The segment at 1 to 47 (MAGQEQQQPQSRESEFEDDAPATPPAPGEAQASAATQGVDDLLDEID) is disordered. The ARC ATPase binding stretch occupies residues 25 to 61 (PAPGEAQASAATQGVDDLLDEIDGVLESNAEEFVRAF). Position 67 is a deamidated glutamine (Gln67). Gln67 is covalently cross-linked (Isoglutamyl lysine isopeptide (Gln-Lys) (interchain with K-? in acceptor proteins)).

It belongs to the prokaryotic ubiquitin-like protein family. In terms of assembly, strongly interacts with the proteasome-associated ATPase ARC through a hydrophobic interface; the interacting region of Pup lies in its C-terminal half. There is one Pup binding site per ARC hexamer ring. Is modified by deamidation of its C-terminal glutamine to glutamate by the deamidase Dop, a prerequisite to the subsequent pupylation process.

The protein operates within protein degradation; proteasomal Pup-dependent pathway. Functionally, protein modifier that is covalently attached to lysine residues of substrate proteins, thereby targeting them for proteasomal degradation. The tagging system is termed pupylation. This chain is Prokaryotic ubiquitin-like protein Pup, found in Arthrobacter sp. (strain FB24).